A 340-amino-acid chain; its full sequence is 4-hydroxy-3-methylbut-2-enyl diphosphate reductase (340 aa).

[4Fe-4S] cluster is bound at residue Cys-13. Residues His-42 and His-75 each contribute to the (2E)-4-hydroxy-3-methylbut-2-enyl diphosphate site. Residues His-42 and His-75 each contribute to the dimethylallyl diphosphate site. Residues His-42 and His-75 each coordinate isopentenyl diphosphate. Cys-97 provides a ligand contact to [4Fe-4S] cluster. His-125 provides a ligand contact to (2E)-4-hydroxy-3-methylbut-2-enyl diphosphate. His-125 serves as a coordination point for dimethylallyl diphosphate. His-125 provides a ligand contact to isopentenyl diphosphate. Glu-127 acts as the Proton donor in catalysis. Thr-165 serves as a coordination point for (2E)-4-hydroxy-3-methylbut-2-enyl diphosphate. Cys-195 lines the [4Fe-4S] cluster pocket. Residues Ser-223, Ser-224, Asn-225, and Ser-267 each contribute to the (2E)-4-hydroxy-3-methylbut-2-enyl diphosphate site. 4 residues coordinate dimethylallyl diphosphate: Ser-223, Ser-224, Asn-225, and Ser-267. 4 residues coordinate isopentenyl diphosphate: Ser-223, Ser-224, Asn-225, and Ser-267. The disordered stretch occupies residues 317–340 (NNLDNKTAASEEADSLSNDTEQEA). A compositionally biased stretch (polar residues) spans 331–340 (SLSNDTEQEA).

It belongs to the IspH family. The cofactor is [4Fe-4S] cluster.

It carries out the reaction isopentenyl diphosphate + 2 oxidized [2Fe-2S]-[ferredoxin] + H2O = (2E)-4-hydroxy-3-methylbut-2-enyl diphosphate + 2 reduced [2Fe-2S]-[ferredoxin] + 2 H(+). The enzyme catalyses dimethylallyl diphosphate + 2 oxidized [2Fe-2S]-[ferredoxin] + H2O = (2E)-4-hydroxy-3-methylbut-2-enyl diphosphate + 2 reduced [2Fe-2S]-[ferredoxin] + 2 H(+). It functions in the pathway isoprenoid biosynthesis; dimethylallyl diphosphate biosynthesis; dimethylallyl diphosphate from (2E)-4-hydroxy-3-methylbutenyl diphosphate: step 1/1. It participates in isoprenoid biosynthesis; isopentenyl diphosphate biosynthesis via DXP pathway; isopentenyl diphosphate from 1-deoxy-D-xylulose 5-phosphate: step 6/6. Functionally, catalyzes the conversion of 1-hydroxy-2-methyl-2-(E)-butenyl 4-diphosphate (HMBPP) into a mixture of isopentenyl diphosphate (IPP) and dimethylallyl diphosphate (DMAPP). Acts in the terminal step of the DOXP/MEP pathway for isoprenoid precursor biosynthesis. The protein is 4-hydroxy-3-methylbut-2-enyl diphosphate reductase of Zymomonas mobilis subsp. mobilis (strain ATCC 31821 / ZM4 / CP4).